The following is a 1962-amino-acid chain: Sodium channel protein type 10 subunit alpha (1962 aa).

Residues 1-125 are Cytoplasmic-facing; sequence MEFPFGSLET…FNLIRRTAIK (125 aa). The tract at residues 32–56 is disordered; it reads QAAKKAKGKHREQKDQEEKPRPQLD. Positions 33–42 are enriched in basic residues; the sequence is AAKKAKGKHR. Residues 43 to 55 show a composition bias toward basic and acidic residues; sequence EQKDQEEKPRPQL. An I repeat occupies 116–414; that stretch reads FNLIRRTAIK…VTMAYEEQNQ (299 aa). The helical transmembrane segment at 126 to 149 threads the bilayer; it reads VSVHSWFSLFITVTILVNCVGMTQ. The Extracellular segment spans residues 150–154; sequence TELPD. The chain crosses the membrane as a helical span at residues 155–174; that stretch reads RIEYVFTVIYTFEALIKILA. Over 175-187 the chain is Cytoplasmic; that stretch reads RGFCLNEFAYLRD. A helical membrane pass occupies residues 188 to 206; sequence PWDWLDFSVITLAYIGEAT. Over 207 to 212 the chain is Extracellular; sequence ALRGIS. The helical; Voltage-sensor transmembrane segment at 213-232 threads the bilayer; that stretch reads GLRTFRVLRALKTVSVIPGL. The Cytoplasmic segment spans residues 233–248; the sequence is KVIVGALIHSVRKLAD. Residues 249–272 form a helical membrane-spanning segment; it reads VTILTVFCLSVFALVGLQLFKGNL. At 273–350 the chain is on the extracellular side; it reads KNKCVKNCAA…PDFNYTSFDS (78 aa). The cysteines at positions 276 and 328 are disulfide-linked. N-linked (GlcNAc...) asparagine glycans are attached at residues N284, N288, N321, and N344. Positions 351–375 form an intramembrane region, pore-forming; that stretch reads FAWAFLSLFRLMTQDSWERLYQQTL. The Extracellular portion of the chain corresponds to 376–382; the sequence is RASGKMY. A helical membrane pass occupies residues 383-408; it reads MVFFVLVIFLGSFYLVNLILAVVTMA. Residues 409 to 668 are Cytoplasmic-facing; sequence YEEQNQATID…TWVKLKTVLF (260 aa). Phosphoserine occurs at positions 450, 453, 476, and 488. The span at 452–463 shows a compositional bias: polar residues; sequence HSCNGSPLPSKN. Disordered regions lie at residues 452-493 and 521-586; these read HSCN…PYNQ and LDTS…TGEL. S621 and S624 each carry phosphoserine. An II repeat occupies 656–920; that stretch reads CCPTWVKLKT…DEDGEVNNLQ (265 aa). Residues 669 to 693 form a helical membrane-spanning segment; the sequence is GIVTDPFAELTTTLCIVVNTVFMAM. At 694–704 the chain is on the extracellular side; the sequence is EHHGMSSAFEA. Residues 705-728 form a helical membrane-spanning segment; that stretch reads MLQIGNIVFTVFFTAEMVFKIIAF. The Cytoplasmic portion of the chain corresponds to 729–736; that stretch reads DPYYYFQK. Residues 737–756 traverse the membrane as a helical segment; sequence RWNIFDCIIVTVSLIELGAA. Over 757-762 the chain is Extracellular; the sequence is RKGSLS. A helical; Voltage-sensor membrane pass occupies residues 763–782; sequence VLRTFRLLRVFKLAKSWPTL. Residues 783–798 lie on the Cytoplasmic side of the membrane; it reads NTLIKIIGNSVGALGN. The chain crosses the membrane as a helical span at residues 799–819; that stretch reads LTIILAIIVFVFALVGKQLLG. Residues 820-843 lie on the Extracellular side of the membrane; the sequence is ENYRDNRRNISAPNEEWPRWHMHD. The N-linked (GlcNAc...) asparagine glycan is linked to N828. Positions 844–864 form an intramembrane region, pore-forming; it reads FFHSFLIVFRILCGEWIENMW. Over 865–873 the chain is Extracellular; sequence ACMEVGQKS. A disulfide bond links C866 and C875. Residues 874–899 traverse the membrane as a helical segment; the sequence is ICLILFLTVMVLGNLVVLNLFTALLL. The Cytoplasmic segment spans residues 900–1154; sequence NSFSADNLAT…GWQVRKTCYR (255 aa). A compositionally biased stretch (acidic residues) spans 1015–1026; the sequence is LDDLEEDGEEDS. The tract at residues 1015–1035 is disordered; that stretch reads LDDLEEDGEEDSQSSQQEVIL. One copy of the III repeat lies at 1147–1456; sequence QVRKTCYRIV…KKYYNAMKKL (310 aa). A helical transmembrane segment spans residues 1155 to 1178; the sequence is IVEHSWFESFIIFMILLSSGSLAF. The Extracellular portion of the chain corresponds to 1179–1191; it reads EDYHLDQKPTVKA. A helical membrane pass occupies residues 1192-1217; it reads LLEYTDRMFTFIFVLEMLLKWVAYGF. Residues 1218-1223 are Cytoplasmic-facing; that stretch reads KKYFTN. A helical membrane pass occupies residues 1224–1245; it reads AWCWLDFLIVNISLISLIAKIL. Residues 1246–1249 are Extracellular-facing; that stretch reads QYSD. Residues 1250-1271 form a helical; Voltage-sensor membrane-spanning segment; sequence VASIKALRTLRALRPLRALSRF. Residues 1272–1290 lie on the Cytoplasmic side of the membrane; that stretch reads EGMRVVVDALVGAIPSIMN. A helical membrane pass occupies residues 1291-1318; the sequence is VLLVCLIFWLIFSTMGVNFFAGKFGRCI. N-linked (GlcNAc...) asparagine glycans are attached at residues N1319, N1335, and N1343. Topologically, residues 1319–1360 are extracellular; sequence NKTNEYFSLVPLSIVNNISDCKYQNHTGSFFWVNVKVNFDNV. The segment at residues 1361-1382 is an intramembrane region (pore-forming); that stretch reads AMGYLALLQVATFKGWMDIMYA. At 1383–1398 the chain is on the extracellular side; it reads AVDARDVNLQPKWEDN. A helical membrane pass occupies residues 1399–1425; it reads VYMYLYFVIFIIFGGFFTLNLFVGVII. The Cytoplasmic segment spans residues 1426–1478; that stretch reads DNFNQQKKKLGGQDIFMTEEQKKYYNAMKKLGSKKPQKPIPRPLNKYQGFVFD. The residue at position 1458 (S1458) is a Phosphoserine; by PKC. The stretch at 1465–1764 is one IV repeat; sequence IPRPLNKYQG…WEKFDPEATQ (300 aa). A helical transmembrane segment spans residues 1479–1502; the sequence is IVTKQAFDIVIMVLICLNMITMMV. Residues 1503–1513 are Extracellular-facing; it reads ETDEQSAEKTK. The helical transmembrane segment at 1514-1537 threads the bilayer; the sequence is ILNKINQFFVAVFTGECVMKMFAL. The Cytoplasmic portion of the chain corresponds to 1538 to 1543; that stretch reads RHYYFT. The helical transmembrane segment at 1544-1567 threads the bilayer; that stretch reads NGWNVFDFIVVVLSIGSLVFSVIL. The Extracellular segment spans residues 1568–1579; that stretch reads TSLENYFSPTLF. A helical; Voltage-sensor transmembrane segment spans residues 1580 to 1601; it reads RVIRLARIGRILRLIRAAKGIR. The Cytoplasmic portion of the chain corresponds to 1602-1616; it reads TLLFALMMSLPALFN. A helical membrane pass occupies residues 1617–1639; the sequence is IGLLLFLVMFIYSIFGMASFPHV. Topologically, residues 1640–1653 are extracellular; it reads SWEAGIDDMFNFQT. An intramembrane region (pore-forming) is located at residues 1654–1676; the sequence is FANSMLCLFQITTSAGWDGLLSP. At 1677–1704 the chain is on the extracellular side; that stretch reads ILNTGPPYCDPNLPNSNGSRGNCGSPAV. N-linked (GlcNAc...) asparagine glycosylation is present at N1693. The chain crosses the membrane as a helical span at residues 1705–1729; sequence GILFFTTYIIISFLIVVNMYIAVIL. The Cytoplasmic portion of the chain corresponds to 1730–1962; that stretch reads ENFNVATQES…TSKKVTAPGP (233 aa). Residues 1858–1887 form the IQ domain; it reads EDISATVIQKAYRSYVLHRSMTISNPPAVP. The segment at 1914 to 1962 is disordered; it reads KSETASAASFPPSYDSVTRGLSDQINMSTSSSMQNEDEGTSKKVTAPGP. A compositionally biased stretch (polar residues) spans 1928 to 1947; that stretch reads DSVTRGLSDQINMSTSSSMQ.

This sequence belongs to the sodium channel (TC 1.A.1.10) family. Nav1.8/SCN10A subfamily. As to quaternary structure, the channel consists of an ion conducting pore forming alpha-subunit regulated by one or more associated auxiliary subunits SCN1B, SCN2B and SCN3B; electrophysiological properties may vary depending on the type of the associated beta subunits. Found in a number of complexes with PRX, DYNLT1 and PDZD2. Interacts with proteins such as FSTL1, PRX, DYNLT1, PDZD2, S100A10 and many others. Interacts with NEDD4 and NEDD4L. Ubiquitinated by NEDD4L; which promotes its endocytosis. In terms of processing, phosphorylation at Ser-1458 by PKC in a highly conserved cytoplasmic loop slows inactivation of the sodium channel and reduces peak sodium currents. Post-translationally, lacks the cysteine which covalently binds the conotoxin GVIIJ. This cysteine (position 825) is speculated in other sodium channel subunits alpha to be implied in covalent binding with the sodium channel subunit beta-2 or beta-4. Expressed in nodose ganglia, but not in cortex, hippocampus, cerebellum, liver, heart and skeletal muscle.

It localises to the cell membrane. It carries out the reaction Na(+)(in) = Na(+)(out). Its function is as follows. Tetrodotoxin-resistant channel that mediates the voltage-dependent sodium ion permeability of excitable membranes. Assuming opened or closed conformations in response to the voltage difference across the membrane, the protein forms a sodium-selective channel through which sodium ions may pass in accordance with their electrochemical gradient. Plays a role in neuropathic pain mechanisms. The chain is Sodium channel protein type 10 subunit alpha (SCN10A) from Canis lupus familiaris (Dog).